A 171-amino-acid polypeptide reads, in one-letter code: Small ribosomal subunit protein uS13 (171 aa).

Positions 1–11 (MAKGSANNVKV) are enriched in polar residues. Disordered regions lie at residues 1–24 (MAKG…EKKE) and 144–164 (EKGK…GLSI). Over residues 144 to 158 (EKGKKVRGQRTRSNG) the composition is skewed to basic residues.

It belongs to the universal ribosomal protein uS13 family. As to quaternary structure, part of the 30S ribosomal subunit. Forms a loose heterodimer with protein S19. Forms two bridges to the 50S subunit in the 70S ribosome.

Its function is as follows. Located at the top of the head of the 30S subunit, it contacts several helices of the 16S rRNA. In the 70S ribosome it contacts the 23S rRNA (bridge B1a) and protein L5 of the 50S subunit (bridge B1b), connecting the 2 subunits; these bridges are implicated in subunit movement. The polypeptide is Small ribosomal subunit protein uS13 (Thermoplasma acidophilum (strain ATCC 25905 / DSM 1728 / JCM 9062 / NBRC 15155 / AMRC-C165)).